A 361-amino-acid chain; its full sequence is Ataxin-3 (361 aa).

M1 is covalently cross-linked (Peptide (Met-Gly) (interchain with G-Cter in ubiquitin)). The 180-residue stretch at 1–180 (MESIFHEKQE…DCEADQLLQM (180 aa)) folds into the Josephin domain. The active-site Nucleophile is the C14. H119 functions as the Proton acceptor in the catalytic mechanism. N134 is a catalytic residue. K200 participates in a covalent cross-link: Glycyl lysine isopeptide (Lys-Gly) (interchain with G-Cter in ubiquitin). Position 219 is a phosphoserine (S219). UIM domains follow at residues 224–243 (EDEEDLQRALALSRQEIDME) and 244–263 (DEEADLRRAIQLSMQGSSRN). A compositionally biased stretch (polar residues) spans 258 to 278 (QGSSRNISQDMTQTSGTNLTS). The interval 258–338 (QGSSRNISQD…DLGDAMSEED (81 aa)) is disordered. Phosphoserine occurs at positions 265 and 272. Residues 279 to 293 (EELRKRREAYFEKQQ) are compositionally biased toward basic and acidic residues. The segment covering 294 to 305 (QKQQQQQQQQQQ) has biased composition (low complexity). Positions 306–325 (GDLSGQSSHPCERPATSSGA) are enriched in polar residues. At S328 the chain carries Phosphoserine. The region spanning 331–349 (GDAMSEEDMLQAAVTMSLE) is the UIM 3 domain.

In terms of assembly, interacts with STUB1/CHIP (when monoubiquitinated). Interacts with DNA repair proteins RAD23A and RAD23B. Interacts with BECN1 (via its poly-Gln domain). Interacts with PRKN, UBR2, VCP and tubulin. Short isoform 1 interacts with CASP7. Post-translationally, monoubiquitinated N-terminally by UBE2W, possibly leading to activate the deubiquitinating enzyme activity. As to expression, ubiquitous.

The protein localises to the nucleus matrix. It is found in the nucleus. Its subcellular location is the lysosome membrane. The enzyme catalyses Thiol-dependent hydrolysis of ester, thioester, amide, peptide and isopeptide bonds formed by the C-terminal Gly of ubiquitin (a 76-residue protein attached to proteins as an intracellular targeting signal).. In terms of biological role, deubiquitinating enzyme involved in protein homeostasis maintenance, transcription, cytoskeleton regulation, myogenesis and degradation of misfolded chaperone substrates. Binds long polyubiquitin chains and trims them, while it has weak or no activity against chains of 4 or less ubiquitins. Involved in degradation of misfolded chaperone substrates via its interaction with STUB1/CHIP: recruited to monoubiquitinated STUB1/CHIP, and restricts the length of ubiquitin chain attached to STUB1/CHIP substrates and preventing further chain extension. Interacts with key regulators of transcription and represses transcription: acts as a histone-binding protein that regulates transcription. Acts as a negative regulator of mTORC1 signaling in response to amino acid deprivation by mediating deubiquitination of RHEB, thereby promoting RHEB inactivation by the TSC-TBC complex. Regulates autophagy via the deubiquitination of 'Lys-402' of BECN1 leading to the stabilization of BECN1. This Homo sapiens (Human) protein is Ataxin-3.